The primary structure comprises 246 residues: Thiamine import ATP-binding protein ThiQ (246 aa).

In terms of domain architecture, ABC transporter spans V10–L239. G41–S48 is a binding site for ATP.

It belongs to the ABC transporter superfamily. Thiamine importer (TC 3.A.1.19.1) family. The complex is composed of two ATP-binding proteins (ThiQ), two transmembrane proteins (ThiP) and a solute-binding protein (ThiB).

The protein resides in the cell inner membrane. It carries out the reaction thiamine(out) + ATP + H2O = thiamine(in) + ADP + phosphate + H(+). Its function is as follows. Part of the ABC transporter complex ThiBPQ involved in thiamine import. Responsible for energy coupling to the transport system. The protein is Thiamine import ATP-binding protein ThiQ of Chelativorans sp. (strain BNC1).